We begin with the raw amino-acid sequence, 451 residues long: Jacalin-related lectin 35 (451 aa).

A2 is modified (N-acetylalanine). Jacalin-type lectin domains are found at residues 2 to 143, 156 to 297, and 306 to 448; these read AKKL…YIIP, LTKL…YIIP, and SNTI…NVAP.

The protein belongs to the jacalin lectin family. As to quaternary structure, component of the PYK10 complex, at least composed of PYK10/BGLU23, BGLU21, BGLU22, JAL22, JAL23, PBP1/JAL30, PBP2/JAL31, JAL32, JAL33, JAL34, JAL35, GLL22 and GLL23.

The sequence is that of Jacalin-related lectin 35 (JAL35) from Arabidopsis thaliana (Mouse-ear cress).